The primary structure comprises 152 residues: 3-dehydroquinate dehydratase (152 aa).

Catalysis depends on Y23, which acts as the Proton acceptor. Substrate contacts are provided by N75, H81, and D88. H101 (proton donor) is an active-site residue. Substrate contacts are provided by residues 102 to 103 (IS) and R112.

The protein belongs to the type-II 3-dehydroquinase family. Homododecamer.

The enzyme catalyses 3-dehydroquinate = 3-dehydroshikimate + H2O. Its pathway is metabolic intermediate biosynthesis; chorismate biosynthesis; chorismate from D-erythrose 4-phosphate and phosphoenolpyruvate: step 3/7. Functionally, catalyzes a trans-dehydration via an enolate intermediate. The sequence is that of 3-dehydroquinate dehydratase from Alkalilimnicola ehrlichii (strain ATCC BAA-1101 / DSM 17681 / MLHE-1).